The sequence spans 535 residues: Palmdelphin (535 aa).

Residues 1 to 105 are a coiled coil; sequence MEEAELLKER…KEELQVSTKE (105 aa). The disordered stretch occupies residues 423-450; it reads VVIDDDDDDDDDEEADKKGEENTKESVS. Acidic residues predominate over residues 424 to 436; sequence VIDDDDDDDDDEE. Basic and acidic residues predominate over residues 437-446; sequence ADKKGEENTK.

It belongs to the paralemmin family.

It localises to the cytoplasm. It is found in the cell projection. Its subcellular location is the dendrite. The protein resides in the dendritic spine. The sequence is that of Palmdelphin (palmd) from Xenopus laevis (African clawed frog).